The following is a 407-amino-acid chain: Accessory Sec system protein translocase subunit SecY2 (407 aa).

Transmembrane regions (helical) follow at residues isoleucine 22–aspartate 42, leucine 68–isoleucine 88, glutamate 108–valine 128, phenylalanine 136–alanine 156, proline 169–isoleucine 189, isoleucine 191–threonine 211, isoleucine 245–phenylalanine 265, phenylalanine 280–leucine 300, tryptophan 343–valine 363, and leucine 366–isoleucine 386.

The protein belongs to the SecY/SEC61-alpha family. SecY2 subfamily. In terms of assembly, component of the accessory SecA2/SecY2 protein translocase complex required to export cell wall proteins. May form heterotrimers with SecE and SecG subunits.

It is found in the cell membrane. Functionally, part of the accessory SecA2/SecY2 system specifically required for export of possible cell wall proteins. The central subunit of a protein translocation channel. The polypeptide is Accessory Sec system protein translocase subunit SecY2 (Staphylococcus pseudintermedius (strain ED99)).